The sequence spans 301 residues: Phosducin-like protein (301 aa).

Thr2 is subject to N-acetylthreonine. Residues Ser18–Thr57 form a disordered region. A phosphoserine mark is found at Ser20 and Ser25. Over residues Ala36–Ala49 the composition is skewed to low complexity. In terms of domain architecture, Phosducin spans Ala36–Glu299. Residues Ser226, Ser293, and Ser296 each carry the phosphoserine modification.

This sequence belongs to the phosducin family. In terms of assembly, forms a complex with the beta and gamma subunits of the GTP-binding protein, transducin. Interacts with the CCT chaperonin complex.

The protein resides in the cell projection. Its subcellular location is the cilium. In terms of biological role, acts as a positive regulator of hedgehog signaling and regulates ciliary function. Functions as a co-chaperone for CCT in the assembly of heterotrimeric G protein complexes, facilitates the assembly of both Gbeta-Ggamma and RGS-Gbeta5 heterodimers. Its function is as follows. Acts as a negative regulator of heterotrimeric G proteins assembly by trapping the preloaded G beta subunits inside the CCT chaperonin. The chain is Phosducin-like protein (PDCL) from Homo sapiens (Human).